Consider the following 73-residue polypeptide: Homeodomain-only protein (73 aa).

The segment at residues 3-62 (TEKSVTPTEEQLEILEYNFCKVNKHPDPTTLCLIAAETGLSEEQTLKWFKQRLAEWRKSE) is a DNA-binding region (homeobox; degenerate).

The protein localises to the nucleus. The protein resides in the cytoplasm. Its function is as follows. Atypical homeodomain protein which does not bind DNA and is required to modulate cardiac growth and development. May act via an interaction with SRF, leading to modulate the expression of SRF-dependent cardiac-specific genes and cardiac development. May act as a co-chaperone for HSPA1A and HSPA1B chaperone proteins and assist in chaperone-mediated protein refolding. The sequence is that of Homeodomain-only protein (HOPX) from Gallus gallus (Chicken).